Reading from the N-terminus, the 272-residue chain is uncharacterized protein (272 aa).

The first 20 residues, 1–20 (MMEPKSIFLLGLLLFRVGKL), serve as a signal peptide directing secretion.

This is an uncharacterized protein from Caenorhabditis elegans.